A 479-amino-acid polypeptide reads, in one-letter code: Anaerobic nitric oxide reductase flavorubredoxin (479 aa).

The interval Leu-30–Ile-210 is zinc metallo-hydrolase. 6 residues coordinate Fe cation: His-79, Glu-81, Asp-83, His-147, Asp-166, and His-227. In terms of domain architecture, Flavodoxin-like spans Ile-254–Ala-393. Residues Thr-260–Asn-264 and Ala-342–Leu-369 contribute to the FMN site. The Rubredoxin-like domain maps to Gly-423–Leu-474. Cys-428, Cys-431, Cys-461, and Cys-464 together coordinate Fe cation.

The protein in the N-terminal section; belongs to the zinc metallo-hydrolase group 3 family. Homotetramer. It depends on Fe cation as a cofactor. FMN serves as cofactor.

The protein localises to the cytoplasm. The protein operates within nitrogen metabolism; nitric oxide reduction. Functionally, anaerobic nitric oxide reductase; uses NADH to detoxify nitric oxide (NO), protecting several 4Fe-4S NO-sensitive enzymes. Has at least 2 reductase partners, only one of which (NorW, flavorubredoxin reductase) has been identified. NO probably binds to the di-iron center; electrons enter from the NorW at rubredoxin and are transferred sequentially to the FMN center and the di-iron center. Also able to function as an aerobic oxygen reductase. The protein is Anaerobic nitric oxide reductase flavorubredoxin of Salmonella paratyphi A (strain ATCC 9150 / SARB42).